We begin with the raw amino-acid sequence, 286 residues long: Acetyl-coenzyme A carboxylase carboxyl transferase subunit beta (286 aa).

A CoA carboxyltransferase N-terminal domain is found at 27–286 (LMTKCPKCKL…HSEETNHATI (260 aa)). Zn(2+) is bound by residues C31, C34, C50, and C52. A C4-type zinc finger spans residues 31–52 (CPKCKLIQYTKQLEANLKVCVC).

Belongs to the AccD/PCCB family. As to quaternary structure, acetyl-CoA carboxylase is a heterohexamer composed of biotin carboxyl carrier protein (AccB), biotin carboxylase (AccC) and two subunits each of ACCase subunit alpha (AccA) and ACCase subunit beta (AccD). It depends on Zn(2+) as a cofactor.

The protein resides in the cytoplasm. It catalyses the reaction N(6)-carboxybiotinyl-L-lysyl-[protein] + acetyl-CoA = N(6)-biotinyl-L-lysyl-[protein] + malonyl-CoA. Its pathway is lipid metabolism; malonyl-CoA biosynthesis; malonyl-CoA from acetyl-CoA: step 1/1. Its function is as follows. Component of the acetyl coenzyme A carboxylase (ACC) complex. Biotin carboxylase (BC) catalyzes the carboxylation of biotin on its carrier protein (BCCP) and then the CO(2) group is transferred by the transcarboxylase to acetyl-CoA to form malonyl-CoA. This chain is Acetyl-coenzyme A carboxylase carboxyl transferase subunit beta, found in Exiguobacterium sibiricum (strain DSM 17290 / CCUG 55495 / CIP 109462 / JCM 13490 / 255-15).